The primary structure comprises 878 residues: Microtubule-associated protein homolog maph-1.1 (878 aa).

2 disordered regions span residues 224–425 (ALSD…AQAT) and 456–518 (EIPP…PVVP). Composition is skewed to low complexity over residues 241 to 268 (PSARPATTTGTATRPTRPAVPAASAPRA), 278 to 293 (SRPTTTRNAAPAPRTA), 310 to 321 (APTRAPVPARSA), and 328 to 339 (APAKPAANTAKA). Basic and acidic residues-rich tracts occupy residues 416 to 425 (PPRHEVAQAT) and 480 to 496 (EEDKIPEPVDAFKKPDP).

Belongs to the MAP1A/MAP1B/MAP1S family. As to quaternary structure, interacts with dlg-1.

It localises to the cell projection. Its subcellular location is the dendrite. The protein localises to the perikaryon. It is found in the axon. The protein resides in the cytoplasm. It localises to the cytoskeleton. The polypeptide is Microtubule-associated protein homolog maph-1.1 (Caenorhabditis elegans).